The following is a 168-amino-acid chain: Large ribosomal subunit protein bL9 (168 aa).

Positions 148 to 168 (ENGEGSVQPAAEAAEVASTEA) are disordered. Residues 157–168 (AAEAAEVASTEA) show a composition bias toward low complexity.

The protein belongs to the bacterial ribosomal protein bL9 family.

In terms of biological role, binds to the 23S rRNA. This Herpetosiphon aurantiacus (strain ATCC 23779 / DSM 785 / 114-95) protein is Large ribosomal subunit protein bL9.